Reading from the N-terminus, the 608-residue chain is Protein UL27 (608 aa).

Pro residues predominate over residues 1–13 (MNPVDQPPPPLPT). Positions 1-33 (MNPVDQPPPPLPTQQPEEQAKEDHDDGDERLFR) are disordered. A compositionally biased stretch (basic and acidic residues) spans 18-33 (EQAKEDHDDGDERLFR).

This sequence belongs to the herpesviridae U4 family. As to quaternary structure, interacts with host KAT5, PSME3 and EP400.

The protein localises to the host nucleus. It localises to the host nucleolus. Its function is as follows. Promotes a cell cycle arrest in G0/G1 by inducing the proteasomal degradation of host histone acetyltransferase KAT5/Tip60. In Human cytomegalovirus (strain AD169) (HHV-5), this protein is Protein UL27 (UL27).